The chain runs to 407 residues: Indoleamine 2,3-dioxygenase 1 (407 aa).

Position 350 (H350) interacts with heme b. Positions 362 to 407 (SKKKPTDGDKSEEPSNVESRGTGGTNPMTFLRSVKDTTEKALLSWP) are disordered. Basic and acidic residues predominate over residues 365-374 (KPTDGDKSEE).

Belongs to the indoleamine 2,3-dioxygenase family. In terms of assembly, monomer. Heme b serves as cofactor. As to expression, highly expressed in epididymis, duodemum, jejunum, ileum, colon and spleen. Highly expressed in epididymis, prostate, duodemum, jejunum, ileum, colon and spleen, not detected in the liver (at protein level). Expressed in tumors only upon exposure to IFN gamma. Constitutively expressed in placenta in trophoblast cells. Expression is restricted to perinuclear regions of primary trophoblast giant cells (TGCs) of fetal origin at mid-gestation (10.5 dpc). After placentation (14 dpc), no IDO expression was detected at the maternal-fetal interface.

The protein resides in the cytoplasm. The protein localises to the cytosol. It catalyses the reaction D-tryptophan + O2 = N-formyl-D-kynurenine. The catalysed reaction is L-tryptophan + O2 = N-formyl-L-kynurenine. Activity is inhibited by and MTH-trp (methylthiohydantoin-DL-tryptophan), modestly inhibited by L-1MT (1-methyl-L-tryptophan) but not D-1MT (1-methyl-D-tryptophan). Its function is as follows. Catalyzes the first and rate limiting step of the catabolism of the essential amino acid tryptophan along the kynurenine pathway. Involved in the peripheral immune tolerance, contributing to maintain homeostasis by preventing autoimmunity or immunopathology that would result from uncontrolled and overreacting immune responses. Tryptophan shortage inhibits T lymphocytes division and accumulation of tryptophan catabolites induces T-cell apoptosis and differentiation of regulatory T-cells. Acts as a suppressor of anti-tumor immunity. Limits the growth of intracellular pathogens by depriving tryptophan. Protects the fetus from maternal immune rejection. This is Indoleamine 2,3-dioxygenase 1 from Mus musculus (Mouse).